The chain runs to 187 residues: Protein GrpE (187 aa).

Over residues 1–15 (MKETKQEEMEVREDC) the composition is skewed to basic and acidic residues. The disordered stretch occupies residues 1-40 (MKETKQEEMEVREDCESVDSNLEATVEEMESTKGTSEDLE).

Belongs to the GrpE family. As to quaternary structure, homodimer.

The protein resides in the cytoplasm. Its function is as follows. Participates actively in the response to hyperosmotic and heat shock by preventing the aggregation of stress-denatured proteins, in association with DnaK and GrpE. It is the nucleotide exchange factor for DnaK and may function as a thermosensor. Unfolded proteins bind initially to DnaJ; upon interaction with the DnaJ-bound protein, DnaK hydrolyzes its bound ATP, resulting in the formation of a stable complex. GrpE releases ADP from DnaK; ATP binding to DnaK triggers the release of the substrate protein, thus completing the reaction cycle. Several rounds of ATP-dependent interactions between DnaJ, DnaK and GrpE are required for fully efficient folding. The polypeptide is Protein GrpE (Alkaliphilus oremlandii (strain OhILAs) (Clostridium oremlandii (strain OhILAs))).